We begin with the raw amino-acid sequence, 122 residues long: Large ribosomal subunit protein uL14 (122 aa).

Belongs to the universal ribosomal protein uL14 family. As to quaternary structure, part of the 50S ribosomal subunit. Forms a cluster with proteins L3 and L19. In the 70S ribosome, L14 and L19 interact and together make contacts with the 16S rRNA in bridges B5 and B8.

Binds to 23S rRNA. Forms part of two intersubunit bridges in the 70S ribosome. The sequence is that of Large ribosomal subunit protein uL14 from Synechococcus sp. (strain JA-3-3Ab) (Cyanobacteria bacterium Yellowstone A-Prime).